Reading from the N-terminus, the 87-residue chain is Small ribosomal subunit protein bS18 (87 aa).

The tract at residues 1–21 is disordered; sequence MRHKPTPPKGNKSLGNALASK.

This sequence belongs to the bacterial ribosomal protein bS18 family. As to quaternary structure, part of the 30S ribosomal subunit. Forms a tight heterodimer with protein bS6.

Binds as a heterodimer with protein bS6 to the central domain of the 16S rRNA, where it helps stabilize the platform of the 30S subunit. This Chlorobium phaeobacteroides (strain DSM 266 / SMG 266 / 2430) protein is Small ribosomal subunit protein bS18.